The sequence spans 223 residues: Virulence transcriptional regulatory protein PhoP (223 aa).

In terms of domain architecture, Response regulatory spans 2-116 (RVLVVEDNAL…EVMARMQALM (115 aa)). Asp51 carries the post-translational modification 4-aspartylphosphate. Residues 124–222 (SQVISLPPFQ…VRGQGYLFEL (99 aa)) constitute a DNA-binding region (ompR/PhoB-type).

Phosphorylated by PhoQ.

The protein localises to the cytoplasm. Member of the two-component regulatory system PhoQ/PhoP involved in virulence and adaptation to low Mg(2+) environments. Necessary for resistance to killing by polymorphonuclear leukocytes (PMNs) and cationic antimicrobial peptides (CAMP) they produce. This is Virulence transcriptional regulatory protein PhoP (phoP) from Shigella flexneri.